We begin with the raw amino-acid sequence, 46 residues long: uncharacterized protein (46 aa).

The protein localises to the plastid. It localises to the chloroplast. This is an uncharacterized protein from Trieres chinensis (Marine centric diatom).